The following is a 273-amino-acid chain: Putative phosphoenolpyruvate synthase regulatory protein (273 aa).

G153–T160 is a binding site for ADP.

This sequence belongs to the pyruvate, phosphate/water dikinase regulatory protein family. PSRP subfamily.

It catalyses the reaction [pyruvate, water dikinase] + ADP = [pyruvate, water dikinase]-phosphate + AMP + H(+). It carries out the reaction [pyruvate, water dikinase]-phosphate + phosphate + H(+) = [pyruvate, water dikinase] + diphosphate. Its function is as follows. Bifunctional serine/threonine kinase and phosphorylase involved in the regulation of the phosphoenolpyruvate synthase (PEPS) by catalyzing its phosphorylation/dephosphorylation. The chain is Putative phosphoenolpyruvate synthase regulatory protein from Albidiferax ferrireducens (strain ATCC BAA-621 / DSM 15236 / T118) (Rhodoferax ferrireducens).